A 1279-amino-acid chain; its full sequence is Talin-A (1279 aa).

The region spanning 84-365 (RPQKFKLLDG…GYIEIIMKAR (282 aa)) is the FERM domain.

The protein resides in the cytoplasm. It is found in the cytoskeleton. It localises to the cell cortex. In terms of biological role, actin-binding protein that may be involved in the control of cell motility and chemotaxis. This Dictyostelium discoideum (Social amoeba) protein is Talin-A (talA).